Here is a 348-residue protein sequence, read N- to C-terminus: GTPase Obg (348 aa).

The Obg domain occupies 1–159; it reads MKFLDLAKVY…RTIWLRLKLI (159 aa). One can recognise an OBG-type G domain in the interval 160 to 327; it reads ADAGLLGLPN…VLRAVRAEID (168 aa). GTP is bound by residues 166 to 173, 191 to 195, 212 to 215, 279 to 282, and 308 to 310; these read GLPNAGKS, FTTLH, DIPG, NKID, and SSV. Mg(2+) contacts are provided by Ser173 and Thr193.

Belongs to the TRAFAC class OBG-HflX-like GTPase superfamily. OBG GTPase family. In terms of assembly, monomer. It depends on Mg(2+) as a cofactor.

It localises to the cytoplasm. In terms of biological role, an essential GTPase which binds GTP, GDP and possibly (p)ppGpp with moderate affinity, with high nucleotide exchange rates and a fairly low GTP hydrolysis rate. Plays a role in control of the cell cycle, stress response, ribosome biogenesis and in those bacteria that undergo differentiation, in morphogenesis control. This is GTPase Obg from Ruegeria sp. (strain TM1040) (Silicibacter sp.).